A 543-amino-acid polypeptide reads, in one-letter code: MSSVLPTPVLPTPGRNINRGHFPDDFIFGAGTSSYQIEGAAREGGRGPSIWDTFTHTHPELIQDGSNGDTAINSYNLYKEDIKIVKLMGLDAYRFSISWPRILPGGSINAGINQEGIKYYNNLIDELLANDIVPYVTLFHWDVPQALQDQYDGFLSDKIVDDFRDFAELCFWEFGDRVKNWITINEPQSYSDFFGVAYDTPPKAHALKASRLLVPTTVARPSKPVRVFASTADPGTTTADQVYKVGHNLLLAHAAAIQVYRDKFQNTQEGTFGMALVTQWMKPLNENNPADVEAASRAFDFKFGWFMQPLITGEYPKSMRQLLGPRLREFTPDQKKLLIGSYDYVGVNYYTATYVSSAQPPHDKKKAVFHTDGNFYTTDSKDGVLIGPLAGPAWLNIVPEGIYHVLHDIKENYEDPVIYITENGVYEVNDTAKTLSEARVDTTRLHYLQDHLSKVLEARHQGVRVQGYLVWSLMDNWELRAGYTSRFGLIHVDYYNNFARYPKDSAIWFRNAFHKRLRIHVNKARPQEDDGAFDTPRKRLRKY.

A beta-D-glucoside-binding positions include glutamine 36, histidine 140, asparagine 185–glutamate 186, tyrosine 350, glutamate 422, tryptophan 471, and phenylalanine 487. The Proton donor role is filled by glutamate 186. The Nucleophile role is filled by glutamate 422.

Belongs to the glycosyl hydrolase 1 family.

The protein resides in the cytoplasm. Its subcellular location is the cytosol. It catalyses the reaction deacetylipecoside + H2O = deacetylipecoside aglycone + D-glucose. The enzyme catalyses deacetylisoipecoside + H2O = deacetylisoipecoside aglycone + D-glucose. It functions in the pathway alkaloid biosynthesis. Its function is as follows. Beta-glucosidase catalyzing deglucosylation on N-deacetylisoipecoside and N-deacetylipecoside. This is Ipecac alkaloid beta-glucosidase 3 from Carapichea ipecacuanha (Ipecac).